The following is a 317-amino-acid chain: Ribonuclease Z (317 aa).

Zn(2+) contacts are provided by H61, H63, D65, H66, H153, D221, and H280. The Proton acceptor role is filled by D65.

It belongs to the RNase Z family. In terms of assembly, homodimer. The cofactor is Zn(2+).

The catalysed reaction is Endonucleolytic cleavage of RNA, removing extra 3' nucleotides from tRNA precursor, generating 3' termini of tRNAs. A 3'-hydroxy group is left at the tRNA terminus and a 5'-phosphoryl group is left at the trailer molecule.. Zinc phosphodiesterase, which displays some tRNA 3'-processing endonuclease activity. Probably involved in tRNA maturation, by removing a 3'-trailer from precursor tRNA. The protein is Ribonuclease Z of Alkaliphilus oremlandii (strain OhILAs) (Clostridium oremlandii (strain OhILAs)).